The sequence spans 863 residues: Bifunctional uridylyltransferase/uridylyl-removing enzyme (863 aa).

A uridylyltransferase region spans residues 1-328 (MLFPLSLSSP…SSNQATVIEQ (328 aa)). A uridylyl-removing region spans residues 329 to 687 (LDDDFQLINQ…ISNRFSLGGT (359 aa)). One can recognise an HD domain in the interval 446 to 568 (VDEHTLRVML…VQNQVRLDYL (123 aa)). 2 consecutive ACT domains span residues 688–772 (EVFI…PNRQ) and 794–863 (EMEL…RNIG).

This sequence belongs to the GlnD family. It depends on Mg(2+) as a cofactor.

The enzyme catalyses [protein-PII]-L-tyrosine + UTP = [protein-PII]-uridylyl-L-tyrosine + diphosphate. It catalyses the reaction [protein-PII]-uridylyl-L-tyrosine + H2O = [protein-PII]-L-tyrosine + UMP + H(+). With respect to regulation, uridylyltransferase (UTase) activity is inhibited by glutamine, while glutamine activates uridylyl-removing (UR) activity. In terms of biological role, modifies, by uridylylation and deuridylylation, the PII regulatory proteins (GlnB and homologs), in response to the nitrogen status of the cell that GlnD senses through the glutamine level. Under low glutamine levels, catalyzes the conversion of the PII proteins and UTP to PII-UMP and PPi, while under higher glutamine levels, GlnD hydrolyzes PII-UMP to PII and UMP (deuridylylation). Thus, controls uridylylation state and activity of the PII proteins, and plays an important role in the regulation of nitrogen assimilation and metabolism. The polypeptide is Bifunctional uridylyltransferase/uridylyl-removing enzyme (Haemophilus influenzae (strain PittEE)).